Here is a 433-residue protein sequence, read N- to C-terminus: Histone acetyltransferase type B subunit 2 (433 aa).

WD repeat units follow at residues 131–171 (EHPG…LDPT), 184–224 (GHEA…ADSR), 234–274 (HHTQ…TNKA), 281–321 (GHLD…EKVH), and 325–365 (GHND…EEQL). Residues 367–371 (DDQDD) form an interaction with the histone H4 N-terminus region. A WD 6 repeat occupies 382–422 (GHTNHLADFSWNPNEPWLVASAAEDNLLQIWKVAESIVGKD).

The protein belongs to the WD repeat RBAP46/RBAP48/MSI1 family. Component of the HAT-B complex composed of at least HAT1 and HAT2. The HAT-B complex binds to histone H4 tail.

Its subcellular location is the cytoplasm. The protein localises to the nucleus. Regulatory subunit of the histone acetylase B (HAT-B) complex. The complex acetylates 'Lys-12' of histone H4 which is required for telomeric silencing. In Gibberella zeae (strain ATCC MYA-4620 / CBS 123657 / FGSC 9075 / NRRL 31084 / PH-1) (Wheat head blight fungus), this protein is Histone acetyltransferase type B subunit 2 (HAT2).